A 374-amino-acid polypeptide reads, in one-letter code: Chaperone protein DnaJ (374 aa).

The 66-residue stretch at 5-70 (DYYEVLGVER…SKRAAYDQYG (66 aa)) folds into the J domain. Residues 133-211 (GTTVNIRVPT…CHGEGRVEEY (79 aa)) form a CR-type zinc finger. Zn(2+) is bound by residues Cys-146, Cys-149, Cys-163, Cys-166, Cys-185, Cys-188, Cys-199, and Cys-202. CXXCXGXG motif repeat units follow at residues 146–153 (CKPCDGSG), 163–170 (CPTCGGIG), 185–192 (CPRCHGQG), and 199–206 (CDSCHGEG).

Belongs to the DnaJ family. In terms of assembly, homodimer. Zn(2+) serves as cofactor.

The protein resides in the cytoplasm. Participates actively in the response to hyperosmotic and heat shock by preventing the aggregation of stress-denatured proteins and by disaggregating proteins, also in an autonomous, DnaK-independent fashion. Unfolded proteins bind initially to DnaJ; upon interaction with the DnaJ-bound protein, DnaK hydrolyzes its bound ATP, resulting in the formation of a stable complex. GrpE releases ADP from DnaK; ATP binding to DnaK triggers the release of the substrate protein, thus completing the reaction cycle. Several rounds of ATP-dependent interactions between DnaJ, DnaK and GrpE are required for fully efficient folding. Also involved, together with DnaK and GrpE, in the DNA replication of plasmids through activation of initiation proteins. The chain is Chaperone protein DnaJ from Pseudomonas fluorescens (strain ATCC BAA-477 / NRRL B-23932 / Pf-5).